Consider the following 1895-residue polypeptide: Diacylglycerol kinase eta (1895 aa).

Residues 1 to 10 (MAHLKLDTLH) are compositionally biased toward basic and acidic residues. The segment at 1-37 (MAHLKLDTLHVQRSPRGSRRSSPSSGRSSACSSGSIS) is disordered. Residues 20–37 (RSSPSSGRSSACSSGSIS) show a composition bias toward low complexity. Residues 82–175 (AIIKEGFLLK…WLGSLKTATA (94 aa)) form the PH domain. Phorbol-ester/DAG-type zinc fingers lie at residues 195 to 245 (HHHW…IANC) and 267 to 318 (PHQW…AVAC). Positions 349-485 (GNFSPLLVFV…DRWSIMVFEK (137 aa)) constitute a DAGKc domain. Disordered stretches follow at residues 781 to 801 (ANID…ENTP), 1012 to 1053 (TTLC…MARL), 1113 to 1137 (QHRG…GANL), and 1172 to 1191 (PNTI…HGQD). The span at 1113–1128 (QHRGGDNDSDYPEHEQ) shows a compositional bias: basic and acidic residues. A compositionally biased stretch (polar residues) spans 1172 to 1184 (PNTILTTSTSPTK). Positions 1832-1895 (WSVNEVVTWL…LQAIKDLSEN (64 aa)) constitute an SAM domain.

Belongs to the eukaryotic diacylglycerol kinase family.

It localises to the cytoplasm. It carries out the reaction a 1,2-diacyl-sn-glycerol + ATP = a 1,2-diacyl-sn-glycero-3-phosphate + ADP + H(+). Phosphorylates diacylglycerol (DAG) to generate phosphatidic acid (PA). This is Diacylglycerol kinase eta from Drosophila melanogaster (Fruit fly).